A 569-amino-acid chain; its full sequence is Serine/threonine-protein kinase gad8 (569 aa).

The interval 19–63 (GLNSGGSSFTRGLKNSTLSSTSSRKSSDEKSRKSSEDKRSPQSTV) is disordered. The segment covering 31-42 (LKNSTLSSTSSR) has biased composition (low complexity). Positions 43-58 (KSSDEKSRKSSEDKRS) are enriched in basic and acidic residues. The C2 domain maps to 45–202 (SDEKSRKSSE…IVNKLTDEWV (158 aa)). One can recognise a Protein kinase domain in the interval 230–485 (FELLKVVGKG…AQEIKNHPFF (256 aa)). Residues 236–244 (VGKGSFGKV) and K259 each bind ATP. The active-site Proton acceptor is D353. Residue T387 is modified to Phosphothreonine; by ksg1. An AGC-kinase C-terminal domain is found at 486-557 (DDIDWKKLCA…QRPTTIDTSD (72 aa)). Residues S527 and S546 each carry the phosphoserine; by TORC2 modification.

It belongs to the protein kinase superfamily. AGC Ser/Thr protein kinase family. Phosphorylated by ksg1 and target of rapamycin complex 2 (TORC2), affecting the kinase activity of gad8 in a nutrient-dependent manner.

The enzyme catalyses L-seryl-[protein] + ATP = O-phospho-L-seryl-[protein] + ADP + H(+). It carries out the reaction L-threonyl-[protein] + ATP = O-phospho-L-threonyl-[protein] + ADP + H(+). In terms of biological role, involved in a signaling module for sexual development and cell growth under stressed conditions. Required for G1 arrest under nitrogen starvation and for growth at high temperature and osmolarity. This chain is Serine/threonine-protein kinase gad8, found in Schizosaccharomyces pombe (strain 972 / ATCC 24843) (Fission yeast).